The chain runs to 57 residues: Major exported protein (57 aa).

It belongs to the hcp1 family. Homodimer.

It is found in the secreted. The sequence is that of Major exported protein from Pseudomonas syringae pv. ribicola.